The sequence spans 434 residues: ATP-sensitive inward rectifier potassium channel 14 (434 aa).

Over 1-81 (MGLARALRRL…LSDLFTTCVD (81 aa)) the chain is Cytoplasmic. The residue at position 79 (cysteine 79) is an S-nitrosocysteine. Residues 82-108 (VRWRWMCLLFSCSFLASWLLFGLTFWL) traverse the membrane as a helical segment. The Extracellular portion of the chain corresponds to 109-131 (IASLHGDLAAPPPPAPCFSQVAS). Positions 132–148 (FLAAFLFALETQTSIGY) form an intramembrane region, helical; Pore-forming. Residues 145 to 150 (SIGYGV) carry the Selectivity filter motif. At 149 to 157 (GVRSVTEEC) the chain is on the extracellular side. Residues 158-185 (PAAVAAVVLQCIAGCVLDAFVVGAVMAK) traverse the membrane as a helical segment. Residues 186–434 (MAKPKKRNET…TPTLALTLPP (249 aa)) are Cytoplasmic-facing. The tract at residues 398–434 (QEEDEEEDTKEGTSAETPDRAASPQALTPTLALTLPP) is disordered. Residues 407–416 (KEGTSAETPD) are compositionally biased toward basic and acidic residues. The segment covering 418–434 (AASPQALTPTLALTLPP) has biased composition (low complexity).

It belongs to the inward rectifier-type potassium channel (TC 1.A.2.1) family. KCNJ14 subfamily. Expressed predominantly in motoneurons of cranial nerve motor nuclei within the general somatic and special visceral motor cell column.

It localises to the membrane. It catalyses the reaction K(+)(in) = K(+)(out). Its activity is regulated as follows. Channel activity is regulated by variations of cytosolic pH; channels are activated by alkaline and inhibited by acidic pH values. Inhibited by Ba(2+) and Cs(+) in a voltage-dependent manner; sensitivity to those inhibitors is lower than in other Kir channels. Inward rectifier potassium channels are characterized by a greater tendency to allow potassium to flow into the cell rather than out of it. Their voltage dependence is regulated by the concentration of extracellular potassium; as external potassium is raised, the voltage range of the channel opening shifts to more positive voltages. This chain is ATP-sensitive inward rectifier potassium channel 14 (Kcnj14), found in Rattus norvegicus (Rat).